The sequence spans 659 residues: UvrABC system protein B (659 aa).

Residues Glu-27–Ile-414 enclose the Helicase ATP-binding domain. Gly-40–Thr-47 provides a ligand contact to ATP. Residues Tyr-93–Ser-116 carry the Beta-hairpin motif. A Helicase C-terminal domain is found at Gln-432 to Ile-594. The UVR domain occupies Glu-624–Asn-659.

It belongs to the UvrB family. In terms of assembly, forms a heterotetramer with UvrA during the search for lesions. Interacts with UvrC in an incision complex.

The protein localises to the cytoplasm. In terms of biological role, the UvrABC repair system catalyzes the recognition and processing of DNA lesions. A damage recognition complex composed of 2 UvrA and 2 UvrB subunits scans DNA for abnormalities. Upon binding of the UvrA(2)B(2) complex to a putative damaged site, the DNA wraps around one UvrB monomer. DNA wrap is dependent on ATP binding by UvrB and probably causes local melting of the DNA helix, facilitating insertion of UvrB beta-hairpin between the DNA strands. Then UvrB probes one DNA strand for the presence of a lesion. If a lesion is found the UvrA subunits dissociate and the UvrB-DNA preincision complex is formed. This complex is subsequently bound by UvrC and the second UvrB is released. If no lesion is found, the DNA wraps around the other UvrB subunit that will check the other stand for damage. This chain is UvrABC system protein B, found in Mycoplasma mobile (strain ATCC 43663 / 163K / NCTC 11711) (Mesomycoplasma mobile).